The primary structure comprises 269 residues: Mitochondrial S-adenosylmethionine carrier protein (269 aa).

3 Solcar repeats span residues 4 to 77 (REFC…AKQL), 85 to 167 (LSPI…LKDL), and 176 to 264 (VDSW…VRTL). The next 6 membrane-spanning stretches (helical) occupy residues 5–25 (EFCASLLAGGTAGMCVDLILF), 49–69 (IYAGVPSTAVGSFPNAAAFFV), 84–104 (YLSPIIHMAAASLGEVVACLI), 141–161 (RGYKSTVLREIPFSLVQFPLW), 181–201 (SAVCGAFAGGFAAALTTPLDV), and 237–257 (FAGVIPRMTAISLGGFIFLGA).

The protein belongs to the mitochondrial carrier (TC 2.A.29) family.

Its subcellular location is the mitochondrion inner membrane. The enzyme catalyses S-adenosyl-L-homocysteine(out) + S-adenosyl-L-methionine(in) = S-adenosyl-L-homocysteine(in) + S-adenosyl-L-methionine(out). Functionally, mitochondrial S-adenosyl-L-methionine/S-adenosyl-L-homocysteine antiporter. Mediates the exchange of cytosolic S-adenosyl-L-methionine, the predominant methyl-group donor for macromolecule methylation processes, for mitochondrial S-adenosylhomocysteine(SAH), a by-product of methylation reactions. This is Mitochondrial S-adenosylmethionine carrier protein (slc25a26) from Xenopus tropicalis (Western clawed frog).